Reading from the N-terminus, the 90-residue chain is UPF0223 protein SH1855 (90 aa).

This sequence belongs to the UPF0223 family.

The polypeptide is UPF0223 protein SH1855 (Staphylococcus haemolyticus (strain JCSC1435)).